A 132-amino-acid chain; its full sequence is Cytochrome b5 (132 aa).

In terms of domain architecture, Cytochrome b5 heme-binding spans 2–78 (GKIFTLAEVA…LDEYYVGDID (77 aa)). Heme-binding residues include H37 and H61. A helical membrane pass occupies residues 104 to 124 (FVIKLLQFLVPLVILAGAIGI).

This sequence belongs to the cytochrome b5 family.

It is found in the endoplasmic reticulum membrane. It localises to the microsome membrane. In terms of biological role, membrane bound hemoprotein which function as an electron carrier for several membrane bound oxygenases. In Borago officinalis (Bourrache), this protein is Cytochrome b5.